The primary structure comprises 1136 residues: Myosin-binding protein C, fast-type (1136 aa).

Disordered stretches follow at residues 1–55 (MPEA…KKPD) and 151–177 (APRQDSSGQSLESFKRSGDGKSEDAGE). A compositionally biased stretch (basic and acidic residues) spans 13-35 (KGKDAPKEAPAKQTPEEPPKEAP). The Ig-like C2-type 1 domain occupies 46-149 (PTGIFLKKPD…CDSCSFNVDV (104 aa)). Basic and acidic residues predominate over residues 163–174 (SFKRSGDGKSED). 4 consecutive Ig-like C2-type domains span residues 250-339 (SAAF…VKEP), 340-432 (PVLI…VEEK), 433-533 (QLEV…KQEP), and 534-633 (PKIH…VVDV). Fibronectin type-III domains lie at 636-732 (PPEA…IAPT) and 734-829 (APQH…IREI). The 95-residue stretch at 833–927 (PKIRLPRHLR…ATIRIRVVEK (95 aa)) folds into the Ig-like C2-type 6 domain. The Fibronectin type-III 3 domain maps to 930-1025 (PAENVMVKEV…SKNTARILKT (96 aa)). Residues 1043–1136 (PKFLTPLMDR…ECKLDVRVPQ (94 aa)) enclose the Ig-like C2-type 7 domain.

It belongs to the immunoglobulin superfamily. MyBP family.

Thick filament-associated protein located in the crossbridge region of vertebrate striated muscle a bands. In vitro it binds MHC, F-actin and native thin filaments, and modifies the activity of actin-activated myosin ATPase. It may modulate muscle contraction or may play a more structural role. This Mus musculus (Mouse) protein is Myosin-binding protein C, fast-type (Mybpc2).